The primary structure comprises 414 residues: 2,3-diketo-5-methylthiopentyl-1-phosphate enolase (414 aa).

Lys-99 serves as the catalytic Proton acceptor. Substrate is bound by residues Lys-148, 174–177, His-265, Gly-338, and 360–361; these read KDDE and GG. Residues Lys-174, Asp-176, and Glu-177 each contribute to the Mg(2+) site. Lys-174 carries the N6-carboxylysine modification.

The protein belongs to the RuBisCO large chain family. Type IV subfamily. In terms of assembly, homodimer. Mg(2+) is required as a cofactor.

It catalyses the reaction 5-methylsulfanyl-2,3-dioxopentyl phosphate = 2-hydroxy-5-methylsulfanyl-3-oxopent-1-enyl phosphate. It participates in amino-acid biosynthesis; L-methionine biosynthesis via salvage pathway; L-methionine from S-methyl-5-thio-alpha-D-ribose 1-phosphate: step 3/6. In terms of biological role, catalyzes the enolization of 2,3-diketo-5-methylthiopentyl-1-phosphate (DK-MTP-1-P) into 2-hydroxy-3-keto-5-methylthiopentenyl-1-phosphate (HK-MTPenyl-1-P). This chain is 2,3-diketo-5-methylthiopentyl-1-phosphate enolase, found in Bacillus cereus (strain B4264).